Reading from the N-terminus, the 177-residue chain is CCHC-type zinc finger nucleic acid binding protein (177 aa).

Residue serine 2 is modified to N-acetylserine. The segment at asparagine 4–threonine 21 adopts a CCHC-type 1 zinc-finger fold. The residue at position 8 (lysine 8) is an N6-acetyllysine. Arginine 25 and arginine 27 each carry omega-N-methylarginine; by PRMT1. Residues arginine 25–threonine 38 form an RNA-binding Arg/Gly-rich region (RGG-box) region. Omega-N-methylarginine occurs at positions 32 and 34. Serine 49 carries the phosphoserine modification. 6 CCHC-type zinc fingers span residues aspartate 52 to leucine 69, aspartate 72 to glutamate 89, glutamine 96 to histidine 113, glutamine 117 to lysine 134, valine 135 to lysine 152, and valine 156 to isoleucine 173. Omega-N-methylarginine is present on residues alanine 73, arginine 79, and glycine 80.

Associates with the 40S ribosomal subunit, the 80S ribosome and with polysomes. Arginine methylation by PRMT1 in the Arg/Gly-rich region impedes RNA binding. As to expression, expressed in the liver, kidney, spleen, testis, lung, muscle and adrenal glands.

The protein localises to the nucleus. Its subcellular location is the cytoplasm. The protein resides in the endoplasmic reticulum. Functionally, single-stranded DNA-binding protein that preferentially binds to the sterol regulatory element (SRE) sequence 5'-GTGCGGTG-3', and thereby mediates transcriptional repression. Has a role as transactivator of the Myc promoter. Binds single-stranded RNA in a sequence-specific manner. Its function is as follows. Binds G-rich elements in target mRNA coding sequences. Prevents G-quadruplex structure formation in vitro, suggesting a role in supporting translation by resolving stable structures on mRNAs. In terms of biological role, binds to RNA. The protein is CCHC-type zinc finger nucleic acid binding protein of Homo sapiens (Human).